A 738-amino-acid polypeptide reads, in one-letter code: Coiled-coil domain-containing protein 142 (738 aa).

The disordered stretch occupies residues 1–34 (MARASSSSGPLPPLANVPSSWAQPVGAGEERDEG). The stretch at 69–92 (ALQRLRATLLRLHREREQLLRARD) forms a coiled coil. A disordered region spans residues 682–704 (LSTLGGGGRGGGGGGGPGPSPEA). Over residues 685–698 (LGGGGRGGGGGGGP) the composition is skewed to gly residues.

The polypeptide is Coiled-coil domain-containing protein 142 (Ccdc142) (Mus musculus (Mouse)).